We begin with the raw amino-acid sequence, 198 residues long: Large ribosomal subunit protein uL5 (198 aa).

This sequence belongs to the universal ribosomal protein uL5 family. In terms of assembly, part of the 50S ribosomal subunit; part of the 5S rRNA/L5/L18/L25 subcomplex. Contacts the 5S rRNA and the P site tRNA. Forms a bridge to the 30S subunit in the 70S ribosome.

In terms of biological role, this is one of the proteins that bind and probably mediate the attachment of the 5S RNA into the large ribosomal subunit, where it forms part of the central protuberance. In the 70S ribosome it contacts protein S13 of the 30S subunit (bridge B1b), connecting the 2 subunits; this bridge is implicated in subunit movement. Contacts the P site tRNA; the 5S rRNA and some of its associated proteins might help stabilize positioning of ribosome-bound tRNAs. The chain is Large ribosomal subunit protein uL5 from Chlorobium phaeovibrioides (strain DSM 265 / 1930) (Prosthecochloris vibrioformis (strain DSM 265)).